The sequence spans 254 residues: Pimeloyl-[acyl-carrier protein] methyl ester esterase (254 aa).

Residues 16 to 241 (LVLLHGWGMN…QSSHAPFMTE (226 aa)) form the AB hydrolase-1 domain. Substrate is bound by residues Trp-22, 82–83 (SL), and 143–147 (FMALQ). The active-site Nucleophile is Ser-82. Active-site residues include Asp-207 and His-235. Residue His-235 coordinates substrate.

The protein belongs to the AB hydrolase superfamily. Carboxylesterase BioH family. As to quaternary structure, monomer.

The protein localises to the cytoplasm. It carries out the reaction 6-carboxyhexanoyl-[ACP] methyl ester + H2O = 6-carboxyhexanoyl-[ACP] + methanol + H(+). Its pathway is cofactor biosynthesis; biotin biosynthesis. Its function is as follows. The physiological role of BioH is to remove the methyl group introduced by BioC when the pimeloyl moiety is complete. It allows to synthesize pimeloyl-ACP via the fatty acid synthetic pathway through the hydrolysis of the ester bonds of pimeloyl-ACP esters. The chain is Pimeloyl-[acyl-carrier protein] methyl ester esterase from Vibrio campbellii (strain ATCC BAA-1116).